The following is a 468-amino-acid chain: 3-isopropylmalate dehydratase large subunit (468 aa).

Positions 347, 408, and 411 each coordinate [4Fe-4S] cluster.

The protein belongs to the aconitase/IPM isomerase family. LeuC type 1 subfamily. As to quaternary structure, heterodimer of LeuC and LeuD. [4Fe-4S] cluster is required as a cofactor.

The catalysed reaction is (2R,3S)-3-isopropylmalate = (2S)-2-isopropylmalate. It functions in the pathway amino-acid biosynthesis; L-leucine biosynthesis; L-leucine from 3-methyl-2-oxobutanoate: step 2/4. Catalyzes the isomerization between 2-isopropylmalate and 3-isopropylmalate, via the formation of 2-isopropylmaleate. The protein is 3-isopropylmalate dehydratase large subunit of Methylobacillus flagellatus (strain ATCC 51484 / DSM 6875 / VKM B-1610 / KT).